Reading from the N-terminus, the 703-residue chain is MTHIPKRTLVTTALPYANGPVHLGHLAGVYLPADIYVRYKRLCGHDVIHIGGSDEHGVPITITADKEGISPQEVVDRYHTMNAEAFAKCGISFDYYGRTSGPVHHQTAREFFLEIEKKGIFVKKTEKQFFDPKAGRFLSDRYITGTCPVCKTPGANGDQCEQCGTHLSPTELIDPKSKLSDATPELRETLHWYFPLGRYQKQLEAFVERHTGDWRSNVVNYSRTWLNQGLADRAITRDLAWGISLPLDSEEAKGKVLYVWFDAVLGYISFTKEWAEKQGDAELWRRYWQDPETRIINFIGKDNVVFHTLMFPAILMAWNEGRSEGRYELADNVPASEFMNFEGRKFSKSRNYAVYLGEFLERFPADTLRYSIAMNYPENKDTDFSWSDFQNRTNGELADTLGNFIKRSIDFTNSRFGGQVPADIDLEAWDSLGIDWLASFGKLEAAYDGFHFREATAQTMEIARFANRFLTESEPWKVIKVDPEAAGRTMAVSLNLCHTLALLFWPIVPETANRIWKMLGFEGTIDELVEPGNPVWRQALEPGLKKGHKLLGSSEILFSKIEDKDIEPEMKKIEALLAEAEQREAAKQPVPMTFKPEITFDDFQKIDLRVAKVVACEPVKKANKLLKLQLQVGSEQRQVLSGIAQYFTPEQMVGKNVVLVANLADRTMRGELSQGMILTVEGADGRLFLLEPQGEGINGNSVS.

A 'HIGH' region motif is present at residues 15–25; the sequence is PYANGPVHLGH. The Zn(2+) site is built by Cys-147, Cys-150, Cys-160, and Cys-163. Positions 345 to 349 match the 'KMSKS' region motif; that stretch reads KFSKS. Lys-348 provides a ligand contact to ATP. The 102-residue stretch at 602 to 703 folds into the tRNA-binding domain; the sequence is DFQKIDLRVA…GEGINGNSVS (102 aa).

It belongs to the class-I aminoacyl-tRNA synthetase family. MetG type 1 subfamily. In terms of assembly, homodimer. It depends on Zn(2+) as a cofactor.

It is found in the cytoplasm. The catalysed reaction is tRNA(Met) + L-methionine + ATP = L-methionyl-tRNA(Met) + AMP + diphosphate. Functionally, is required not only for elongation of protein synthesis but also for the initiation of all mRNA translation through initiator tRNA(fMet) aminoacylation. In Chlorobaculum tepidum (strain ATCC 49652 / DSM 12025 / NBRC 103806 / TLS) (Chlorobium tepidum), this protein is Methionine--tRNA ligase.